We begin with the raw amino-acid sequence, 263 residues long: 4-hydroxy-tetrahydrodipicolinate reductase (263 aa).

Residues 8-13 (GACGRM), Asp34, 99-101 (GTT), and 125-128 (SPNY) each bind NAD(+). His157 acts as the Proton donor/acceptor in catalysis. His158 contacts (S)-2,3,4,5-tetrahydrodipicolinate. Residue Lys161 is the Proton donor of the active site. 167 to 168 (GT) contributes to the (S)-2,3,4,5-tetrahydrodipicolinate binding site.

It belongs to the DapB family.

Its subcellular location is the cytoplasm. It carries out the reaction (S)-2,3,4,5-tetrahydrodipicolinate + NAD(+) + H2O = (2S,4S)-4-hydroxy-2,3,4,5-tetrahydrodipicolinate + NADH + H(+). The catalysed reaction is (S)-2,3,4,5-tetrahydrodipicolinate + NADP(+) + H2O = (2S,4S)-4-hydroxy-2,3,4,5-tetrahydrodipicolinate + NADPH + H(+). It functions in the pathway amino-acid biosynthesis; L-lysine biosynthesis via DAP pathway; (S)-tetrahydrodipicolinate from L-aspartate: step 4/4. Its function is as follows. Catalyzes the conversion of 4-hydroxy-tetrahydrodipicolinate (HTPA) to tetrahydrodipicolinate. This is 4-hydroxy-tetrahydrodipicolinate reductase from Methanosarcina barkeri (strain Fusaro / DSM 804).